The chain runs to 374 residues: tRNA-specific 2-thiouridylase MnmA (374 aa).

Residues 12 to 19 (GMSGGVDS) and M38 contribute to the ATP site. The interaction with target base in tRNA stretch occupies residues 98-100 (NPD). C103 (nucleophile) is an active-site residue. A disulfide bridge connects residues C103 and C207. G128 provides a ligand contact to ATP. Residues 157–159 (KDQ) are interaction with tRNA. C207 (cysteine persulfide intermediate) is an active-site residue. The interaction with tRNA stretch occupies residues 321-322 (RY).

This sequence belongs to the MnmA/TRMU family.

Its subcellular location is the cytoplasm. The enzyme catalyses S-sulfanyl-L-cysteinyl-[protein] + uridine(34) in tRNA + AH2 + ATP = 2-thiouridine(34) in tRNA + L-cysteinyl-[protein] + A + AMP + diphosphate + H(+). In terms of biological role, catalyzes the 2-thiolation of uridine at the wobble position (U34) of tRNA, leading to the formation of s(2)U34. This Aliivibrio fischeri (strain MJ11) (Vibrio fischeri) protein is tRNA-specific 2-thiouridylase MnmA.